Consider the following 200-residue polypeptide: Segregation and condensation protein B (200 aa).

The protein belongs to the ScpB family. In terms of assembly, homodimer. Homodimerization may be required to stabilize the binding of ScpA to the Smc head domains. Component of a cohesin-like complex composed of ScpA, ScpB and the Smc homodimer, in which ScpA and ScpB bind to the head domain of Smc. The presence of the three proteins is required for the association of the complex with DNA.

It is found in the cytoplasm. In terms of biological role, participates in chromosomal partition during cell division. May act via the formation of a condensin-like complex containing Smc and ScpA that pull DNA away from mid-cell into both cell halves. In Lactobacillus delbrueckii subsp. bulgaricus (strain ATCC 11842 / DSM 20081 / BCRC 10696 / JCM 1002 / NBRC 13953 / NCIMB 11778 / NCTC 12712 / WDCM 00102 / Lb 14), this protein is Segregation and condensation protein B.